The primary structure comprises 580 residues: F-box only protein 24 (580 aa).

The F-box domain maps to 36–82 (PISIQLFPPELVEHIISFLPVRDLVALGQTCRYFHEVCDAEGVWRRI). One copy of the RCC1 repeat lies at 376–425 (GRIFMQGNNRYGQLGTGDKMDRGEPTQVRYLQRPITLWCGLNHSLVLSQS).

Directly interacts with SKP1 and CUL1.

Its function is as follows. Substrate-recognition component of the SCF (SKP1-CUL1-F-box protein)-type E3 ubiquitin ligase complex. This is F-box only protein 24 (FBXO24) from Macaca fascicularis (Crab-eating macaque).